A 351-amino-acid polypeptide reads, in one-letter code: MLKNDLFLRALKRQPCSRTPIWVMRQAGRYLPEYRAVREKTDFLTLCKTPELATEVTIQPVELVGVDAAIIFSDILVVNEAMGQEVNIIETKGIKLAPPIRSQADIDKLIVPDIDEKLGYVLDALRMTKKELDNRVPLIGFSGAAWTLFTYAVEGGGSKNYAYAKQMMYREPQMAHSLLSKISQTITAYTLKQIEAGADAIQIFDSWASALSEDDYREYALPYIKDTVQAIKAKHPETPVIVFSKDCNTILSDIADTGCDAVGLGWGIDISKARTELNDRVALQGNLDPTVLYGTQERIKIEAGKILKSFGQHNHHSGHVFNLGHGILPDMDPDNLRCLVEFVKEESAKYH.

Residues 25–29 (RQAGR), D74, Y151, S206, and H325 each bind substrate.

The protein belongs to the uroporphyrinogen decarboxylase family. As to quaternary structure, homodimer.

Its subcellular location is the cytoplasm. It catalyses the reaction uroporphyrinogen III + 4 H(+) = coproporphyrinogen III + 4 CO2. It participates in porphyrin-containing compound metabolism; protoporphyrin-IX biosynthesis; coproporphyrinogen-III from 5-aminolevulinate: step 4/4. Functionally, catalyzes the decarboxylation of four acetate groups of uroporphyrinogen-III to yield coproporphyrinogen-III. This Chlorobium chlorochromatii (strain CaD3) protein is Uroporphyrinogen decarboxylase.